We begin with the raw amino-acid sequence, 194 residues long: Large ribosomal subunit protein uL6z/uL6y (194 aa).

T75 bears the Phosphothreonine mark.

Belongs to the universal ribosomal protein uL6 family.

The sequence is that of Large ribosomal subunit protein uL6z/uL6y (RPL9B) from Arabidopsis thaliana (Mouse-ear cress).